Reading from the N-terminus, the 364-residue chain is Phenylalanine dehydrogenase (364 aa).

Arginine 62 provides a ligand contact to NAD(+). Lysine 86 is a binding site for L-phenylalanine. The Proton donor/acceptor role is filled by lysine 98. Residues aspartate 133, serine 164, threonine 168, 255 to 256, and 276 to 278 each bind NAD(+); these read AM and AAN. Asparagine 278 contributes to the L-phenylalanine binding site.

It belongs to the Glu/Leu/Phe/Val dehydrogenases family.

It catalyses the reaction L-phenylalanine + NAD(+) + H2O = 3-phenylpyruvate + NH4(+) + NADH + H(+). It participates in amino-acid biosynthesis; L-phenylalanine biosynthesis; L-phenylalanine from phenylpyruvate (PDH route): step 1/1. In terms of biological role, catalyzes the reversible NAD(+)-dependent oxidative deamination of L-phenylalanine to phenylpyruvate. In Rhodococcus jostii (strain RHA1), this protein is Phenylalanine dehydrogenase.